The chain runs to 385 residues: 3-hydroxyisobutyryl-CoA hydrolase, mitochondrial (385 aa).

The substrate site is built by E120, G145, E168, and D176.

The protein belongs to the enoyl-CoA hydratase/isomerase family.

Its subcellular location is the mitochondrion. The catalysed reaction is 3-hydroxy-2-methylpropanoyl-CoA + H2O = 3-hydroxy-2-methylpropanoate + CoA + H(+). It functions in the pathway amino-acid degradation; L-valine degradation. Hydrolyzes 3-hydroxyisobutyryl-CoA (HIBYL-CoA), a saline catabolite. Has high activity toward isobutyryl-CoA. Could be an isobutyryl-CoA dehydrogenase that functions in valine catabolism. Also hydrolyzes 3-hydroxypropanoyl-CoA. The sequence is that of 3-hydroxyisobutyryl-CoA hydrolase, mitochondrial (HIBCH) from Gallus gallus (Chicken).